The following is an 86-amino-acid chain: Small ribosomal subunit protein bS20 (86 aa).

Belongs to the bacterial ribosomal protein bS20 family.

In terms of biological role, binds directly to 16S ribosomal RNA. The protein is Small ribosomal subunit protein bS20 of Oceanobacillus iheyensis (strain DSM 14371 / CIP 107618 / JCM 11309 / KCTC 3954 / HTE831).